A 272-amino-acid polypeptide reads, in one-letter code: Dihydropteroate synthase (272 aa).

The Pterin-binding domain occupies 1 to 251 (MIKTKIMGIL…GVRVHNVLLN (251 aa)). Residue Asn11 coordinates Mg(2+). Residues Thr51, Asp89, Asn108, Asp172, Lys208, and 244 to 246 (RVH) contribute to the (7,8-dihydropterin-6-yl)methyl diphosphate site.

The protein belongs to the DHPS family. As to quaternary structure, homodimer. Mg(2+) is required as a cofactor.

It carries out the reaction (7,8-dihydropterin-6-yl)methyl diphosphate + 4-aminobenzoate = 7,8-dihydropteroate + diphosphate. It participates in cofactor biosynthesis; tetrahydrofolate biosynthesis; 7,8-dihydrofolate from 2-amino-4-hydroxy-6-hydroxymethyl-7,8-dihydropteridine diphosphate and 4-aminobenzoate: step 1/2. Its function is as follows. Catalyzes the condensation of para-aminobenzoate (pABA) with 6-hydroxymethyl-7,8-dihydropterin diphosphate (DHPt-PP) to form 7,8-dihydropteroate (H2Pte), the immediate precursor of folate derivatives. This chain is Dihydropteroate synthase (folP), found in Staphylococcus epidermidis (strain ATCC 35984 / DSM 28319 / BCRC 17069 / CCUG 31568 / BM 3577 / RP62A).